Reading from the N-terminus, the 304-residue chain is D-alanine--D-alanine ligase (304 aa).

Residues 107–300 (KRLWQGSGLP…FDELVARILG (194 aa)) enclose the ATP-grasp domain. 134–186 (VGYPVIVKPAREGSSLGMSRVEGPEELAEAYRVAAAYDDTVLAEAWVEGEEYT) contacts ATP. Residues aspartate 254, glutamate 267, and asparagine 269 each contribute to the Mg(2+) site.

This sequence belongs to the D-alanine--D-alanine ligase family. The cofactor is Mg(2+). Requires Mn(2+) as cofactor.

The protein resides in the cytoplasm. The catalysed reaction is 2 D-alanine + ATP = D-alanyl-D-alanine + ADP + phosphate + H(+). The protein operates within cell wall biogenesis; peptidoglycan biosynthesis. Its function is as follows. Cell wall formation. This Halorhodospira halophila (strain DSM 244 / SL1) (Ectothiorhodospira halophila (strain DSM 244 / SL1)) protein is D-alanine--D-alanine ligase.